The chain runs to 195 residues: Cysteine/O-acetylserine efflux protein (195 aa).

5 consecutive transmembrane segments (helical) span residues 47-67 (SLGF…LAVI), 70-90 (AAVH…AWKI), 105-125 (ISFW…LYGV), 142-162 (VVGV…CWAL), and 177-194 (QLNI…VRIF).

The protein belongs to the Rht family.

The protein resides in the cell inner membrane. The catalysed reaction is O-acetyl-L-serine(in) = O-acetyl-L-serine(out). It carries out the reaction L-cysteine(in) = L-cysteine(out). Exporter of O-acetylserine (OAS) and cysteine. The protein is Cysteine/O-acetylserine efflux protein (eamB) of Shigella boydii serotype 4 (strain Sb227).